The following is a 135-amino-acid chain: Cilia- and flagella-associated protein 144 (135 aa).

Positions 76–100 (QGPKKKYSETQTEAQEIGWDPNPLI) are disordered.

The protein belongs to the CFAP144 family. As to quaternary structure, microtubule inner protein component of sperm flagellar doublet microtubules. Predominantly expressed in tissues containing motile cilia.

Its subcellular location is the cytoplasm. It is found in the cytoskeleton. It localises to the cilium axoneme. The protein localises to the flagellum axoneme. This Mus musculus (Mouse) protein is Cilia- and flagella-associated protein 144.